A 66-amino-acid chain; its full sequence is Large ribosomal subunit protein bL31 (66 aa).

Residues Cys16, Cys18, Cys36, and Cys39 each contribute to the Zn(2+) site.

It belongs to the bacterial ribosomal protein bL31 family. Type A subfamily. As to quaternary structure, part of the 50S ribosomal subunit. It depends on Zn(2+) as a cofactor.

In terms of biological role, binds the 23S rRNA. This Geobacillus sp. (strain WCH70) protein is Large ribosomal subunit protein bL31.